The following is a 544-amino-acid chain: Lipid II flippase MurJ (544 aa).

14 helical membrane passes run 21 to 41, 49 to 69, 90 to 110, 127 to 147, 169 to 189, 191 to 211, 241 to 261, 297 to 317, 338 to 358, 375 to 395, 404 to 424, 431 to 451, 471 to 491, and 500 to 520; these read ILGM…GGAL, YTLF…KFVS, VMLV…PMFA, VVYV…MSLV, IVRI…FNGG, VIAV…GLVV, MFFE…AIPL, LVMI…PTIT, TILF…GPTY, ILLW…NAAI, FAVV…VPLI, GAIL…FIMI, VLSA…GFFI, and AAIV…YCGY.

The protein belongs to the polysaccharide synthase family.

It is found in the cell membrane. The protein operates within cell wall biogenesis; peptidoglycan biosynthesis. Involved in peptidoglycan biosynthesis. Transports lipid-linked peptidoglycan precursors from the inner to the outer leaflet of the cytoplasmic membrane. Not essential for growth. The sequence is that of Lipid II flippase MurJ from Bacillus subtilis (strain 168).